The sequence spans 138 residues: Phosphoribosyl-AMP cyclohydrolase (138 aa).

Asp-84 is a binding site for Mg(2+). Cys-85 is a Zn(2+) binding site. The Mg(2+) site is built by Asp-86 and Asp-88. Zn(2+) is bound by residues Cys-102 and Cys-109.

This sequence belongs to the PRA-CH family. Homodimer. Requires Mg(2+) as cofactor. Zn(2+) is required as a cofactor.

Its subcellular location is the cytoplasm. The enzyme catalyses 1-(5-phospho-beta-D-ribosyl)-5'-AMP + H2O = 1-(5-phospho-beta-D-ribosyl)-5-[(5-phospho-beta-D-ribosylamino)methylideneamino]imidazole-4-carboxamide. Its pathway is amino-acid biosynthesis; L-histidine biosynthesis; L-histidine from 5-phospho-alpha-D-ribose 1-diphosphate: step 3/9. Catalyzes the hydrolysis of the adenine ring of phosphoribosyl-AMP. In Burkholderia cenocepacia (strain ATCC BAA-245 / DSM 16553 / LMG 16656 / NCTC 13227 / J2315 / CF5610) (Burkholderia cepacia (strain J2315)), this protein is Phosphoribosyl-AMP cyclohydrolase.